We begin with the raw amino-acid sequence, 524 residues long: 56 kDa type-specific antigen (524 aa).

Residues 1-22 (MKKIMLIASAMSALSLPFSASA) form the signal peptide. The helical transmembrane segment at 67-87 (LTTGLPFGGTLAAGMTIAPGF) threads the bilayer. Disordered stretches follow at residues 112 to 132 (SKGE…RKRF) and 387 to 422 (EKLA…KGKE). 2 stretches are compositionally biased toward basic and acidic residues: residues 395–405 (EDAKNQGEGDC) and 413–422 (EKSKEGKGKE). The helical transmembrane segment at 472–492 (TGMVASGALGVAINAAEGVYV) threads the bilayer.

The protein localises to the cell membrane. Functionally, may be an adherent factor for rickettsial adsorption to the host-cell surface and a determinant of virulence of individual rickettsial strain. It is the major outer membrane protein. This chain is 56 kDa type-specific antigen, found in Orientia tsutsugamushi (Rickettsia tsutsugamushi).